A 258-amino-acid chain; its full sequence is Aspartate/glutamate leucyltransferase (258 aa).

It belongs to the R-transferase family. Bpt subfamily.

It is found in the cytoplasm. The enzyme catalyses N-terminal L-glutamyl-[protein] + L-leucyl-tRNA(Leu) = N-terminal L-leucyl-L-glutamyl-[protein] + tRNA(Leu) + H(+). It carries out the reaction N-terminal L-aspartyl-[protein] + L-leucyl-tRNA(Leu) = N-terminal L-leucyl-L-aspartyl-[protein] + tRNA(Leu) + H(+). In terms of biological role, functions in the N-end rule pathway of protein degradation where it conjugates Leu from its aminoacyl-tRNA to the N-termini of proteins containing an N-terminal aspartate or glutamate. This Rhodopseudomonas palustris (strain BisB18) protein is Aspartate/glutamate leucyltransferase.